Here is a 901-residue protein sequence, read N- to C-terminus: Core protein VP3 (901 aa).

The protein belongs to the orbivirus VP3 family.

Its subcellular location is the virion. Functionally, the VP3 protein is one of the five proteins (with VP1, VP4, VP6 and VP7) which form the inner capsid of the virus. The chain is Core protein VP3 (Segment-3) from Antilocapra americana (Pronghorn).